The following is a 525-amino-acid chain: GMP synthase [glutamine-hydrolyzing] (525 aa).

The region spanning 9–202 (SILIIDFGSQ…VHKIVGLKSD (194 aa)) is the Glutamine amidotransferase type-1 domain. The Nucleophile role is filled by Cys86. Residues His176 and Glu178 contribute to the active site. A GMPS ATP-PPase domain is found at 203–400 (WTMAAYRAEM…LGLPESFIGR (198 aa)). Residue 230-236 (SGGVDSS) coordinates ATP.

In terms of assembly, homodimer.

It carries out the reaction XMP + L-glutamine + ATP + H2O = GMP + L-glutamate + AMP + diphosphate + 2 H(+). The protein operates within purine metabolism; GMP biosynthesis; GMP from XMP (L-Gln route): step 1/1. Functionally, catalyzes the synthesis of GMP from XMP. The polypeptide is GMP synthase [glutamine-hydrolyzing] (Agrobacterium fabrum (strain C58 / ATCC 33970) (Agrobacterium tumefaciens (strain C58))).